We begin with the raw amino-acid sequence, 214 residues long: Adenylate kinase (214 aa).

10–15 serves as a coordination point for ATP; it reads GAGKGT. Residues 30–59 form an NMP region; it reads ATGDVLRAAVKEGTPLGLEAKAAMDRGDLV. AMP-binding positions include Thr31, Arg36, 57–59, and Gln92; that span reads DLV. An LID region spans residues 126–161; that stretch reads GRTTCEACQRPFFGRQPGETCTEGGVSGTLVRRKDD. ATP is bound at residue Arg127. The AMP site is built by Arg158 and Arg169. Gly198 contributes to the ATP binding site.

It belongs to the adenylate kinase family. As to quaternary structure, monomer.

The protein resides in the cytoplasm. It carries out the reaction AMP + ATP = 2 ADP. Its pathway is purine metabolism; AMP biosynthesis via salvage pathway; AMP from ADP: step 1/1. Its function is as follows. Catalyzes the reversible transfer of the terminal phosphate group between ATP and AMP. Plays an important role in cellular energy homeostasis and in adenine nucleotide metabolism. This is Adenylate kinase from Gemmatimonas aurantiaca (strain DSM 14586 / JCM 11422 / NBRC 100505 / T-27).